The primary structure comprises 499 residues: Putative ribose/galactose/methyl galactoside import ATP-binding protein 3 (499 aa).

2 ABC transporter domains span residues 8-243 and 253-497; these read LRMR…VGRE and SKIG…TGEE. 40–47 is a binding site for ATP; sequence GENGAGKS.

It belongs to the ABC transporter superfamily. Carbohydrate importer 2 (CUT2) (TC 3.A.1.2) family.

The protein resides in the cell inner membrane. The enzyme catalyses D-ribose(out) + ATP + H2O = D-ribose(in) + ADP + phosphate + H(+). It carries out the reaction D-galactose(out) + ATP + H2O = D-galactose(in) + ADP + phosphate + H(+). In terms of biological role, part of an ABC transporter complex involved in carbohydrate import. Could be involved in ribose, galactose and/or methyl galactoside import. Responsible for energy coupling to the transport system. The chain is Putative ribose/galactose/methyl galactoside import ATP-binding protein 3 from Agrobacterium fabrum (strain C58 / ATCC 33970) (Agrobacterium tumefaciens (strain C58)).